The chain runs to 363 residues: S-adenosylmethionine:tRNA ribosyltransferase-isomerase (363 aa).

This sequence belongs to the QueA family. As to quaternary structure, monomer.

Its subcellular location is the cytoplasm. The enzyme catalyses 7-aminomethyl-7-carbaguanosine(34) in tRNA + S-adenosyl-L-methionine = epoxyqueuosine(34) in tRNA + adenine + L-methionine + 2 H(+). Its pathway is tRNA modification; tRNA-queuosine biosynthesis. In terms of biological role, transfers and isomerizes the ribose moiety from AdoMet to the 7-aminomethyl group of 7-deazaguanine (preQ1-tRNA) to give epoxyqueuosine (oQ-tRNA). This Mannheimia succiniciproducens (strain KCTC 0769BP / MBEL55E) protein is S-adenosylmethionine:tRNA ribosyltransferase-isomerase.